The primary structure comprises 538 residues: Chaperonin GroEL 1 (538 aa).

ATP is bound by residues Thr30 to Pro33, Lys51, Asp87 to Thr91, Gly415, Asn479 to Ala481, and Asp495.

This sequence belongs to the chaperonin (HSP60) family. Forms a cylinder of 14 subunits composed of two heptameric rings stacked back-to-back. Interacts with the co-chaperonin GroES.

Its subcellular location is the cytoplasm. It catalyses the reaction ATP + H2O + a folded polypeptide = ADP + phosphate + an unfolded polypeptide.. Together with its co-chaperonin GroES, plays an essential role in assisting protein folding. The GroEL-GroES system forms a nano-cage that allows encapsulation of the non-native substrate proteins and provides a physical environment optimized to promote and accelerate protein folding. This Chromobacterium violaceum (strain ATCC 12472 / DSM 30191 / JCM 1249 / CCUG 213 / NBRC 12614 / NCIMB 9131 / NCTC 9757 / MK) protein is Chaperonin GroEL 1.